Reading from the N-terminus, the 1357-residue chain is DNA-directed RNA polymerase subunit beta (1357 aa).

The protein belongs to the RNA polymerase beta chain family. In terms of assembly, the RNAP catalytic core consists of 2 alpha, 1 beta, 1 beta' and 1 omega subunit. When a sigma factor is associated with the core the holoenzyme is formed, which can initiate transcription.

It carries out the reaction RNA(n) + a ribonucleoside 5'-triphosphate = RNA(n+1) + diphosphate. In terms of biological role, DNA-dependent RNA polymerase catalyzes the transcription of DNA into RNA using the four ribonucleoside triphosphates as substrates. The polypeptide is DNA-directed RNA polymerase subunit beta (Pseudomonas fluorescens (strain ATCC BAA-477 / NRRL B-23932 / Pf-5)).